Reading from the N-terminus, the 419-residue chain is MAGTGSFKVTRISEGAVKPAAATPEETLPLAWVDRYPTHRGLVESMHIFRSGADAAPGVIRDALARALVFFYPLAGRIVEPEAGSPAIRCTADGVYFAEAAADCSLEDVRFLERPLLLPKEDLVPYPGDDRWGVEPHNTIMMMQITKFTCGGFVMGLRFNHASADGMGAAQFINAVGDMARGLPEPRVKPVWDREKFPNPSIKPGPLPGLPVLALDYIVLDFPTGYIDGLKAQYKAHSGKFCSGFDVLTAKLWQCRTRALNLEPGATVKLCFFASVRHLLKLDRGYYGNSIFPVKMSAPSETVLSSSVMEVVDMIRQAKERMAVEFFQFAKEETEQDPFQMTFNYESIYVSDWSKLGFAEVDYGFGPPKFAGPLVNNDFIASVVILKAPLPLDGTRMLASCVTKEHSEEFVRGMKEDLP.

Residues histidine 161 and aspartate 362 each act as proton acceptor in the active site.

The protein belongs to the plant acyltransferase family.

In terms of biological role, involved in the incorporation of ferulate into the cell wall. May act as arabinoxylan feruloyl transferase. This Oryza sativa subsp. japonica (Rice) protein is Acyl transferase 9.